Here is a 375-residue protein sequence, read N- to C-terminus: Succinyl-diaminopimelate desuccinylase (375 aa).

H66 contacts Zn(2+). Residue D68 is part of the active site. D99 provides a ligand contact to Zn(2+). Catalysis depends on E133, which acts as the Proton acceptor. 3 residues coordinate Zn(2+): E134, E162, and H348.

This sequence belongs to the peptidase M20A family. DapE subfamily. Homodimer. Zn(2+) serves as cofactor. Requires Co(2+) as cofactor.

It catalyses the reaction N-succinyl-(2S,6S)-2,6-diaminopimelate + H2O = (2S,6S)-2,6-diaminopimelate + succinate. It functions in the pathway amino-acid biosynthesis; L-lysine biosynthesis via DAP pathway; LL-2,6-diaminopimelate from (S)-tetrahydrodipicolinate (succinylase route): step 3/3. In terms of biological role, catalyzes the hydrolysis of N-succinyl-L,L-diaminopimelic acid (SDAP), forming succinate and LL-2,6-diaminopimelate (DAP), an intermediate involved in the bacterial biosynthesis of lysine and meso-diaminopimelic acid, an essential component of bacterial cell walls. This chain is Succinyl-diaminopimelate desuccinylase, found in Salmonella dublin (strain CT_02021853).